Reading from the N-terminus, the 484-residue chain is N-succinylglutamate 5-semialdehyde dehydrogenase (484 aa).

221–226 contributes to the NAD(+) binding site; that stretch reads GSAAAG. Active-site residues include glutamate 244 and cysteine 278.

Belongs to the aldehyde dehydrogenase family. AstD subfamily.

It catalyses the reaction N-succinyl-L-glutamate 5-semialdehyde + NAD(+) + H2O = N-succinyl-L-glutamate + NADH + 2 H(+). The protein operates within amino-acid degradation; L-arginine degradation via AST pathway; L-glutamate and succinate from L-arginine: step 4/5. Catalyzes the NAD-dependent reduction of succinylglutamate semialdehyde into succinylglutamate. This is N-succinylglutamate 5-semialdehyde dehydrogenase from Caulobacter sp. (strain K31).